The primary structure comprises 396 residues: Elongation factor Tu 2 (396 aa).

The 197-residue stretch at 10 to 206 folds into the tr-type G domain; sequence KPHVNVGTIG…ALDTYIPTPE (197 aa). The segment at 19-26 is G1; sequence GHVDHGKT. 19–26 is a binding site for GTP; it reads GHVDHGKT. T26 lines the Mg(2+) pocket. A G2 region spans residues 60–64; sequence GITIN. Positions 81 to 84 are G3; it reads DCPG. Residues 81–85 and 136–139 each bind GTP; these read DCPGH and NKAD. The G4 stretch occupies residues 136-139; that stretch reads NKAD. The tract at residues 174-176 is G5; it reads SAK.

The protein belongs to the TRAFAC class translation factor GTPase superfamily. Classic translation factor GTPase family. EF-Tu/EF-1A subfamily. In terms of assembly, monomer.

It is found in the cytoplasm. The enzyme catalyses GTP + H2O = GDP + phosphate + H(+). Functionally, GTP hydrolase that promotes the GTP-dependent binding of aminoacyl-tRNA to the A-site of ribosomes during protein biosynthesis. This Methylobacillus flagellatus (strain ATCC 51484 / DSM 6875 / VKM B-1610 / KT) protein is Elongation factor Tu 2.